A 243-amino-acid chain; its full sequence is ATP-dependent dethiobiotin synthetase BioD (243 aa).

Residue 12–17 coordinates ATP; the sequence is DVGKTF. Mg(2+) is bound at residue Thr16. Lys37 is an active-site residue. A substrate-binding site is contributed by Ser41. Residues Asp54, 115-118, and 179-180 each bind ATP; these read EGCG and NM. 2 residues coordinate Mg(2+): Asp54 and Glu115.

Belongs to the dethiobiotin synthetase family. In terms of assembly, homodimer. It depends on Mg(2+) as a cofactor.

It localises to the cytoplasm. It carries out the reaction (7R,8S)-7,8-diammoniononanoate + CO2 + ATP = (4R,5S)-dethiobiotin + ADP + phosphate + 3 H(+). The protein operates within cofactor biosynthesis; biotin biosynthesis; biotin from 7,8-diaminononanoate: step 1/2. Catalyzes a mechanistically unusual reaction, the ATP-dependent insertion of CO2 between the N7 and N8 nitrogen atoms of 7,8-diaminopelargonic acid (DAPA, also called 7,8-diammoniononanoate) to form a ureido ring. The protein is ATP-dependent dethiobiotin synthetase BioD of Caldicellulosiruptor bescii (strain ATCC BAA-1888 / DSM 6725 / KCTC 15123 / Z-1320) (Anaerocellum thermophilum).